The following is a 118-amino-acid chain: MSEFAPICIYLVISPLVSLIPLGLPFLFSSNSSTYPEKSSAYECGLDPSGDARSRVDIRFYLVSILFIIPDPEVTFSFPWAVPPNKIDPFGSWSMMAFLLILTIGSLYEWKRGASDRE.

2 consecutive transmembrane segments (helical) span residues 7-27 and 87-107; these read ICIY…LPFL and IDPF…IGSL.

Belongs to the complex I subunit 3 family.

The protein resides in the mitochondrion membrane. It carries out the reaction a ubiquinone + NADH + 5 H(+)(in) = a ubiquinol + NAD(+) + 4 H(+)(out). Its function is as follows. Core subunit of the mitochondrial membrane respiratory chain NADH dehydrogenase (Complex I) that is believed to belong to the minimal assembly required for catalysis. Complex I functions in the transfer of electrons from NADH to the respiratory chain. The immediate electron acceptor for the enzyme is believed to be ubiquinone. The protein is NADH-ubiquinone oxidoreductase chain 3 (ND3) of Solanum tuberosum (Potato).